The primary structure comprises 316 residues: Transcription initiation factor IIB (316 aa).

The TFIIB-type zinc finger occupies 11-42 (PRVTCPNHPDAILVEDYRAGDMICPECGLVVG). The Zn(2+) site is built by C15, H18, C34, and C37. S70, S76, and S92 each carry phosphoserine. 2 consecutive repeat copies span residues 124 to 200 (MADR…LILK) and 218 to 294 (FCSN…LIYP). K152, R154, K189, and K196 together coordinate DNA. Positions 189–193 (KEIGR) are core promoter DNA-binding. Position 238 is an N6-acetyllysine; by autocatalysis (K238). The tract at residues 244 to 316 (LVPGRSPISV…DTPVDKLPQL (73 aa)) is necessary for TATA box-bound complex TBP formation. Position 248 (R248) interacts with DNA. Residues 249–252 (SPIS) form a core promoter DNA-binding region. DNA contacts are provided by K272, A281, T284, R286, and R290. A core promoter DNA-binding region spans residues 283–286 (VTIR).

This sequence belongs to the TFIIB family. Found in a ternary complex with TATA box-bound TBP. Part of a TFIID-containing RNA polymerase II pre-initiation complex (PIC) that is composed of TBP and at least GTF2A1, GTF2A2, GTF2E1, GTF2E2, GTF2F1, GTF2H2, GTF2H3, GTF2H4, GTF2H5, GTF2B, TCEA1, ERCC2, ERCC3, TAF1, TAF2, TAF3, TAF4, TAF5, TAF6, TAF7, TAF8, TAF9, TAF10, TAF11, TAF12 and TAF13. Associates with TFIID-TFIIA (DA complex) to form TFIID-TFIIA-TFIIB (DAB complex), which is then recognized by RNA polymerase II (Pol II). Found in a RNA polymerase II initiation complex. Interacts (via C-terminus) with TBP; this interaction with TATA box-bound TBP guides Pol II into the PIC. Interacts (via N-terminus) with Pol II. Interacts (via C-terminus) with SSU72; this interaction is inhibited by SYMPK. Interacts with NR2F1; this interaction is direct. Interacts with PGR. Interacts with ESR1. Interacts with GTF2F1 (via C-terminus and preferentially via acetylated form); this interaction prevents binding of GTF2B to GTF2F2. Interacts with GTF2F2 (via N-terminus); this interaction is inhibited in presence of GTF2F1. Interacts with the transcription elongation factor TCEA2. Interacts with HSF1 (via transactivation domain). Interacts with GPBP1. In terms of processing, acetylated. Autoacetylated; autoacetylation at Lys-238 stimulates transcription activation.

The protein localises to the nucleus. It localises to the chromosome. It catalyses the reaction L-lysyl-[protein] + acetyl-CoA = N(6)-acetyl-L-lysyl-[protein] + CoA + H(+). Its function is as follows. General transcription factor that plays a role in transcription initiation by RNA polymerase II (Pol II). Involved in the pre-initiation complex (PIC) formation and Pol II recruitment at promoter DNA. Together with the TATA box-bound TBP forms the core initiation complex and provides a bridge between TBP and the Pol II-TFIIF complex. Released from the PIC early following the onset of transcription during the initiation and elongation transition and reassociates with TBP during the next transcription cycle. Associates with chromatin to core promoter-specific regions. Binds to two distinct DNA core promoter consensus sequence elements in a TBP-independent manner; these IIB-recognition elements (BREs) are localized immediately upstream (BREu), 5'-[GC][GC][GA]CGCC-3', and downstream (BREd), 5'-[GA]T[TGA][TG][GT][TG][TG]-3', of the TATA box element. Modulates transcription start site selection. Also exhibits autoacetyltransferase activity that contributes to the activated transcription. The sequence is that of Transcription initiation factor IIB from Pongo abelii (Sumatran orangutan).